The following is a 142-amino-acid chain: Universal stress protein G (142 aa).

Belongs to the universal stress protein A family.

The sequence is that of Universal stress protein G (uspG) from Shigella flexneri.